The primary structure comprises 556 residues: Probable glucomannan 4-beta-mannosyltransferase 3 (556 aa).

Residues 56–76 traverse the membrane as a helical segment; sequence IFVFIPILKCLVTICLVMSLL. D159 is an active-site residue. Substrate contacts are provided by D218 and D220. D312 is a catalytic residue. Transmembrane regions (helical) follow at residues 391-411, 428-448, 509-529, and 530-550; these read IVVH…TVLF, ITIL…FWIL, LVVG…GGSY, and FYVY…GYIG.

Belongs to the glycosyltransferase 2 family. Plant cellulose synthase-like A subfamily.

It is found in the golgi apparatus membrane. The catalysed reaction is GDP-mannose + (glucomannan)n = GDP + (glucomannan)n+1.. Probable mannan synthase which consists of a 4-beta-mannosyltransferase activity on mannan using GDP-mannose. The beta-1,4-mannan product is the backbone for galactomannan synthesis by galactomannan galactosyltransferase. Galactomannan is a noncellulosic polysaccharides of plant cell wall. In Arabidopsis thaliana (Mouse-ear cress), this protein is Probable glucomannan 4-beta-mannosyltransferase 3.